The primary structure comprises 823 residues: Trimethylamine-N-oxide reductase (823 aa).

Positions 1 to 32 form a signal peptide, tat-type signal; sequence MKQSRRQFLKNMSAMAATFAMPNFLIAQNAFA. Serine 181 provides a ligand contact to Mo-bis(molybdopterin guanine dinucleotide).

This sequence belongs to the prokaryotic molybdopterin-containing oxidoreductase family. It depends on Mo-bis(molybdopterin guanine dinucleotide) as a cofactor. In terms of processing, predicted to be exported by the Tat system. The position of the signal peptide cleavage has not been experimentally proven.

It localises to the periplasm. The enzyme catalyses trimethylamine + 2 Fe(III)-[cytochrome c] + H2O = trimethylamine N-oxide + 2 Fe(II)-[cytochrome c] + 3 H(+). Reduces trimethylamine-N-oxide (TMAO) into trimethylamine; an anaerobic reaction coupled to energy-yielding reactions. The sequence is that of Trimethylamine-N-oxide reductase (torA) from Pasteurella multocida (strain Pm70).